The primary structure comprises 437 residues: Ribosomal protein uS12 methylthiotransferase RimO (437 aa).

Positions 9-128 (NKINVITLGC…LLKALGADYK (120 aa)) constitute an MTTase N-terminal domain. [4Fe-4S] cluster is bound by residues cysteine 18, cysteine 57, cysteine 91, cysteine 152, cysteine 156, and cysteine 159. The 231-residue stretch at 138–368 (TTPKNYAYLK…MELQSQISWD (231 aa)) folds into the Radical SAM core domain. The 67-residue stretch at 371 to 437 (QEKVGQVFRC…TEFDLYGEPA (67 aa)) folds into the TRAM domain.

Belongs to the methylthiotransferase family. RimO subfamily. The cofactor is [4Fe-4S] cluster.

The protein localises to the cytoplasm. The enzyme catalyses L-aspartate(89)-[ribosomal protein uS12]-hydrogen + (sulfur carrier)-SH + AH2 + 2 S-adenosyl-L-methionine = 3-methylsulfanyl-L-aspartate(89)-[ribosomal protein uS12]-hydrogen + (sulfur carrier)-H + 5'-deoxyadenosine + L-methionine + A + S-adenosyl-L-homocysteine + 2 H(+). In terms of biological role, catalyzes the methylthiolation of an aspartic acid residue of ribosomal protein uS12. The sequence is that of Ribosomal protein uS12 methylthiotransferase RimO from Flavobacterium johnsoniae (strain ATCC 17061 / DSM 2064 / JCM 8514 / BCRC 14874 / CCUG 350202 / NBRC 14942 / NCIMB 11054 / UW101) (Cytophaga johnsonae).